Here is a 458-residue protein sequence, read N- to C-terminus: Argininosuccinate lyase (458 aa).

It belongs to the lyase 1 family. Argininosuccinate lyase subfamily.

The protein resides in the cytoplasm. The catalysed reaction is 2-(N(omega)-L-arginino)succinate = fumarate + L-arginine. Its pathway is amino-acid biosynthesis; L-arginine biosynthesis; L-arginine from L-ornithine and carbamoyl phosphate: step 3/3. In Salmonella heidelberg (strain SL476), this protein is Argininosuccinate lyase.